The primary structure comprises 148 residues: 6,7-dimethyl-8-ribityllumazine synthase (148 aa).

5-amino-6-(D-ribitylamino)uracil is bound by residues Phe-13, Ala-44 to Glu-46, and Met-73 to Ile-75. Residue Glu-78–Thr-79 participates in (2S)-2-hydroxy-3-oxobutyl phosphate binding. His-81 serves as the catalytic Proton donor. 5-amino-6-(D-ribitylamino)uracil is bound at residue Asn-106. Residue Arg-120 coordinates (2S)-2-hydroxy-3-oxobutyl phosphate.

The protein belongs to the DMRL synthase family.

It catalyses the reaction (2S)-2-hydroxy-3-oxobutyl phosphate + 5-amino-6-(D-ribitylamino)uracil = 6,7-dimethyl-8-(1-D-ribityl)lumazine + phosphate + 2 H2O + H(+). It participates in cofactor biosynthesis; riboflavin biosynthesis; riboflavin from 2-hydroxy-3-oxobutyl phosphate and 5-amino-6-(D-ribitylamino)uracil: step 1/2. Functionally, catalyzes the formation of 6,7-dimethyl-8-ribityllumazine by condensation of 5-amino-6-(D-ribitylamino)uracil with 3,4-dihydroxy-2-butanone 4-phosphate. This is the penultimate step in the biosynthesis of riboflavin. The sequence is that of 6,7-dimethyl-8-ribityllumazine synthase from Agrobacterium fabrum (strain C58 / ATCC 33970) (Agrobacterium tumefaciens (strain C58)).